Here is a 358-residue protein sequence, read N- to C-terminus: DNA integrity scanning protein DisA (358 aa).

The 139-residue stretch at 6–144 folds into the DAC domain; that stretch reads RPTLREAVAR…RGERHVLTDS (139 aa). ATP is bound by residues glycine 73, leucine 91, and 104–108; that span reads TRHRS.

Belongs to the DisA family. As to quaternary structure, homooctamer. It depends on Mg(2+) as a cofactor.

It carries out the reaction 2 ATP = 3',3'-c-di-AMP + 2 diphosphate. Functionally, participates in a DNA-damage check-point. DisA forms globular foci that rapidly scan along the chromosomes searching for lesions. Also has diadenylate cyclase activity, catalyzing the condensation of 2 ATP molecules into cyclic di-AMP (c-di-AMP). c-di-AMP likely acts as a signaling molecule that may couple DNA integrity with a cellular process. The chain is DNA integrity scanning protein DisA from Mycobacterium tuberculosis (strain ATCC 25177 / H37Ra).